The following is a 578-amino-acid chain: MGQKGHKDSLYDCKGSPVSSLHEALDQCMTALDLFLTNQFSEALSYLKPRTKESMYHSLTYATILEMQAMMTFDPQDILLAGNMMKEAQSLCQRHRRKSSMTDSFSNLVHRPTIDQFTEEEIHAEVCYAECLLQRAALTFLQDENMVSFIKGGIKVRNSYQTYKELDSLVQSSQYSKGESHRHFEGGVKLGVGAFNLTLSMLPTRILRLLEFVGFSGNKDYGLLQLEEGATGHSFRAVLCVMLLLCYHTFLTFVLGTGNVNIEEAEKLLKPYLNRYPKGAIFLFFAGRIEAIKGNIDAAVRRFEECCEAQQHWKQFHHMCYWELMWCFTYKGQWKMAYFYADLLSKENSWSKATYIYMKAAYLSMFGKEDYKPFGDNEVELFRAVPGLKLKIAGKSLPTEKFAIRKSRRYLSPNPISLPIPALEMMYIWNGYAVIGKQPTLTDGMLEVITKAEEMLAMGPENEYSADDDCLVKLLKGLCLKYLGRIQEAEENFRSISANEKKIKYDHYLIPNALLELALLFMEQGRNEEAIKLLESAKQNYKNYSMESRTHFRIQAATLQARSSLEDGNRSLVSSVSL.

3 TPR repeats span residues 280–313 (AIFLFFAGRIEAIKGNIDAAVRRFEECCEAQQHW), 470–503 (CLVKLLKGLCLKYLGRIQEAEENFRSISANEKKI), and 511–544 (PNALLELALLFMEQGRNEEAIKLLESAKQNYKNY).

The protein belongs to the TTC39 family.

This Mus musculus (Mouse) protein is Tetratricopeptide repeat protein 39A (Ttc39a).